Here is a 254-residue protein sequence, read N- to C-terminus: Type III pantothenate kinase (254 aa).

6 to 13 (DVGNTNTT) contributes to the ATP binding site. Substrate is bound by residues Tyr100 and 107-110 (GADR). The active-site Proton acceptor is the Asp109. Asp129 provides a ligand contact to K(+). Thr132 is a binding site for ATP. Thr184 is a binding site for substrate.

It belongs to the type III pantothenate kinase family. As to quaternary structure, homodimer. Requires NH4(+) as cofactor. The cofactor is K(+).

It is found in the cytoplasm. The catalysed reaction is (R)-pantothenate + ATP = (R)-4'-phosphopantothenate + ADP + H(+). It functions in the pathway cofactor biosynthesis; coenzyme A biosynthesis; CoA from (R)-pantothenate: step 1/5. Catalyzes the phosphorylation of pantothenate (Pan), the first step in CoA biosynthesis. In Anaeromyxobacter dehalogenans (strain 2CP-C), this protein is Type III pantothenate kinase.